A 217-amino-acid polypeptide reads, in one-letter code: UPF0502 protein Smlt0097 (217 aa).

This sequence belongs to the UPF0502 family.

This is UPF0502 protein Smlt0097 from Stenotrophomonas maltophilia (strain K279a).